We begin with the raw amino-acid sequence, 310 residues long: uncharacterized protein (310 aa).

This is an uncharacterized protein from Methanocaldococcus jannaschii (strain ATCC 43067 / DSM 2661 / JAL-1 / JCM 10045 / NBRC 100440) (Methanococcus jannaschii).